Consider the following 962-residue polypeptide: Protease 3 (962 aa).

Positions 1 to 23 (MPRSTWFKALLLLVALWAPLSQA) are cleaved as a signal peptide. His-88 contributes to the Zn(2+) binding site. The Proton acceptor role is filled by Glu-91. Residues His-92 and Glu-169 each coordinate Zn(2+).

This sequence belongs to the peptidase M16 family. As to quaternary structure, monomer. Zn(2+) serves as cofactor.

It localises to the periplasm. The enzyme catalyses Preferential cleavage of 16-Tyr-|-Leu-17 and 25-Phe-|-Tyr-26 bonds of oxidized insulin B chain. Also acts on other substrates of Mw less than 7 kDa such as insulin and glucagon.. Endopeptidase that degrades small peptides of less than 7 kDa, such as glucagon and insulin. In Escherichia coli (strain K12), this protein is Protease 3 (ptrA).